The following is a 149-amino-acid chain: Transcriptional repressor NrdR (149 aa).

A zinc finger lies at cysteine 3–cysteine 34. Positions proline 49 to glutamate 139 constitute an ATP-cone domain.

It belongs to the NrdR family. Zn(2+) serves as cofactor.

Negatively regulates transcription of bacterial ribonucleotide reductase nrd genes and operons by binding to NrdR-boxes. This chain is Transcriptional repressor NrdR, found in Shewanella sp. (strain MR-4).